The following is an 890-amino-acid chain: Phosphotransferase RcsD (890 aa).

At 1 to 21 (MRQKETTATTRFSLLPGSITR) the chain is on the cytoplasmic side. A helical membrane pass occupies residues 22-42 (FFLLLIIVLLVTMGVMVQSAV). The Periplasmic portion of the chain corresponds to 43 to 308 (NAWLKDKSYQ…GTLLLDTLQN (266 aa)). A helical membrane pass occupies residues 309 to 329 (ILLPLLLNIGLLALALFGYTT). Residues 330 to 890 (FRHFSSRSTE…DIDSYVKSLL (561 aa)) lie on the Cytoplasmic side of the membrane. Positions 468 to 678 (NIGDALKEPA…RYSVHIKMLA (211 aa)) are histidine-like kinase. One can recognise an HPt domain in the interval 803 to 890 (AQLHASGYYA…DIDSYVKSLL (88 aa)). His842 carries the phosphohistidine modification.

This sequence belongs to the RcsD family. Interacts with RcsC and RcsB. Has a higher affinity for RcsB than for RcsC. Post-translationally, phosphorylated by RcsC.

It localises to the cell inner membrane. In terms of biological role, component of the Rcs signaling system, which controls transcription of numerous genes. RcsD is a phosphotransfer intermediate between the sensor kinase RcsC and the response regulator RcsB. It acquires a phosphoryl group from RcsC and transfers it to RcsB. The system controls expression of genes involved in colanic acid capsule synthesis, biofilm formation and cell division. The sequence is that of Phosphotransferase RcsD from Escherichia coli (strain K12).